Reading from the N-terminus, the 262-residue chain is Type III pantothenate kinase (262 aa).

9–16 (DIGNTNIV) serves as a coordination point for ATP. Substrate-binding positions include Y103 and 110–113 (GVDR). The active-site Proton acceptor is D112. D132 serves as a coordination point for K(+). An ATP-binding site is contributed by T135. Residue T187 participates in substrate binding.

The protein belongs to the type III pantothenate kinase family. Homodimer. It depends on NH4(+) as a cofactor. Requires K(+) as cofactor.

Its subcellular location is the cytoplasm. The catalysed reaction is (R)-pantothenate + ATP = (R)-4'-phosphopantothenate + ADP + H(+). The protein operates within cofactor biosynthesis; coenzyme A biosynthesis; CoA from (R)-pantothenate: step 1/5. Its function is as follows. Catalyzes the phosphorylation of pantothenate (Pan), the first step in CoA biosynthesis. The chain is Type III pantothenate kinase from Finegoldia magna (strain ATCC 29328 / DSM 20472 / WAL 2508) (Peptostreptococcus magnus).